A 236-amino-acid polypeptide reads, in one-letter code: Chloride intracellular channel protein 3 (236 aa).

A required for insertion into the membrane region spans residues 1-88; sequence MAETKLQLFV…EDFLEETLGP (88 aa). One can recognise a GST N-terminal domain in the interval 12-90; the sequence is ASEDGESVGH…FLEETLGPPD (79 aa). Residues 22-25 carry the G-site motif; that stretch reads CPSC. Cysteine 22 and cysteine 25 are oxidised to a cystine. A helical membrane pass occupies residues 24-44; the sequence is SCQRLFMVLLLKGVPFTLTTV. Phosphoserine occurs at positions 49 and 159. Residues 68-235 enclose the GST C-terminal domain; it reads DSDAKTDTLQ…LAAYRPAVHP (168 aa).

It belongs to the chloride channel CLIC family. In terms of assembly, associated with the C-terminal of MAPK15. In terms of tissue distribution, detected in placenta (at protein level). Widely expressed. High expression is found in placenta followed by lung and heart. Low expression in skeletal muscle, kidney and pancreas.

It localises to the nucleus. It is found in the membrane. The protein localises to the cell membrane. Its subcellular location is the cytoplasm. The protein resides in the secreted. It localises to the extracellular space. It is found in the extracellular matrix. The catalysed reaction is chloride(in) = chloride(out). Its activity is regulated as follows. Inhibited by rapamycin, amphotericin B and IAA-94. In terms of biological role, in the soluble state, catalyzes glutaredoxin-like thiol disulfide exchange reactions with reduced glutathione as electron donor. Reduced in a glutathione-dependent way and secreted into the extracellular matrix where it activates TGM2 and promotes blood vessel growth during tissue remodeling as occurs in tumorigenesis. Can reduce specific cysteines in TGM2 and regulate cofactor binding. Can insert into membranes and form outwardly rectifying chloride ion channels. May participate in cellular growth control. This Homo sapiens (Human) protein is Chloride intracellular channel protein 3.